The chain runs to 1058 residues: Carbamoyl phosphate synthase large chain (1058 aa).

The carboxyphosphate synthetic domain stretch occupies residues 1–399 (MPIDKDIKKV…AIQKAIRSLD (399 aa)). Positions 127, 167, 173, 174, 206, 208, 213, 239, 240, 241, 282, and 296 each coordinate ATP. Residues 131-325 (GHFMDKLNEP…IAKISSKIAL (195 aa)) form the ATP-grasp 1 domain. Gln-282, Glu-296, and Asn-298 together coordinate Mg(2+). Mn(2+) contacts are provided by Gln-282, Glu-296, and Asn-298. Residues 400-538 (MGHDGFEYVE…YSTYDSGNEL (139 aa)) form an oligomerization domain region. A carbamoyl phosphate synthetic domain region spans residues 539–924 (KSSNKKKIVI…YKSQLAAGMD (386 aa)). Residues 663–856 (AKLLNKLHIH…LAKVATWIMT (194 aa)) form the ATP-grasp 2 domain. Residues Arg-699, Lys-738, Leu-740, Glu-745, Gly-770, Val-771, His-772, Ser-773, Gln-813, and Glu-827 each coordinate ATP. Mg(2+)-binding residues include Gln-813, Glu-827, and Asn-829. Mn(2+)-binding residues include Gln-813, Glu-827, and Asn-829. Residues 923 to 1058 (MDLPKEGKIF…KSLNEHIDGE (136 aa)) enclose the MGS-like domain. Residues 925–1058 (LPKEGKIFIS…KSLNEHIDGE (134 aa)) form an allosteric domain region.

This sequence belongs to the CarB family. Composed of two chains; the small (or glutamine) chain promotes the hydrolysis of glutamine to ammonia, which is used by the large (or ammonia) chain to synthesize carbamoyl phosphate. Tetramer of heterodimers (alpha,beta)4. Mg(2+) is required as a cofactor. It depends on Mn(2+) as a cofactor.

The enzyme catalyses hydrogencarbonate + L-glutamine + 2 ATP + H2O = carbamoyl phosphate + L-glutamate + 2 ADP + phosphate + 2 H(+). It catalyses the reaction hydrogencarbonate + NH4(+) + 2 ATP = carbamoyl phosphate + 2 ADP + phosphate + 2 H(+). It participates in amino-acid biosynthesis; L-arginine biosynthesis; carbamoyl phosphate from bicarbonate: step 1/1. Its pathway is pyrimidine metabolism; UMP biosynthesis via de novo pathway; (S)-dihydroorotate from bicarbonate: step 1/3. Large subunit of the glutamine-dependent carbamoyl phosphate synthetase (CPSase). CPSase catalyzes the formation of carbamoyl phosphate from the ammonia moiety of glutamine, carbonate, and phosphate donated by ATP, constituting the first step of 2 biosynthetic pathways, one leading to arginine and/or urea and the other to pyrimidine nucleotides. The large subunit (synthetase) binds the substrates ammonia (free or transferred from glutamine from the small subunit), hydrogencarbonate and ATP and carries out an ATP-coupled ligase reaction, activating hydrogencarbonate by forming carboxy phosphate which reacts with ammonia to form carbamoyl phosphate. This chain is Carbamoyl phosphate synthase large chain, found in Methanobrevibacter smithii (strain ATCC 35061 / DSM 861 / OCM 144 / PS).